We begin with the raw amino-acid sequence, 152 residues long: Protein FERTILITY RESTORER RF2, mitochondrial (152 aa).

Residues 1–52 (MSTLVTCSLPGAVTTHASTRRFGGSQFQTSQASCISFKREVSAKAVLRSVRC) constitute a mitochondrion transit peptide. Residues 52–69 (CNATQTQSAQRKSSTATV) show a composition bias toward polar residues. The interval 52 to 101 (CNATQTQSAQRKSSTATVKRSDPKGKTQGPKLDDGSGGFPPFRFGKGGGG) is disordered.

Its subcellular location is the mitochondrion. Non-functional allele of the RF2 fertility restorer of rice varieties with LD-type cytoplasmic male sterility (CMS). Non-functional RF2 alleles are found in japonica cultivars Taichung 65 and Nipponbare (AC F1SZ44), and is due to the presence of Thr-78 which replaces Ile-78 in the functional allele. Functional allele is found in the japonica cultivars Fukuyama and Owarihatamochi (AC F1SZ42), and indica cultivar Kasalath (AC F1SZ41). The protein is Protein FERTILITY RESTORER RF2, mitochondrial of Oryza sativa subsp. japonica (Rice).